The primary structure comprises 572 residues: Nuclear hormone receptor family member nhr-25 (572 aa).

Residues 15-90 (GEMCPVCGDR…MGMKMEAVRA (76 aa)) constitute a DNA-binding region (nuclear receptor). 2 consecutive NR C4-type zinc fingers follow at residues 18–38 (CPVC…CESC) and 54–78 (CSAE…FQKC). The NR LBD domain occupies 307-567 (PTEKTVDHFY…PTPQATYTAV (261 aa)).

Belongs to the nuclear hormone receptor family. In terms of assembly, interacts with lin-39. Interacts with nob-1. As to expression, expressed in the epidermis, the developing somatic gonad, and a subset of other epithelial cells.

It localises to the nucleus. Functionally, orphan nuclear receptor and probable transcription activator, required during development. Plays a role in male tail tip morphogenesis regulating the expression of the transcription factor dmd-3 in a negative feedback loop. Regulates vulval precursor cell (VPC) differentiation, in concert with homeobox protein lin-39. Involved in promoting embryogenesis, in concert with homeobox protein nob-1. May play a role in modulation of lifespan and immunity. The polypeptide is Nuclear hormone receptor family member nhr-25 (Caenorhabditis elegans).